Reading from the N-terminus, the 399-residue chain is Serine/threonine-protein kinase PKZ1 (399 aa).

The disordered stretch occupies residues 30-50 (PMQCAYQTQSHSNPEGAKRGR). A Protein kinase domain is found at 92-371 (WQLFDQIGAG…ADQMLQHPWM (280 aa)). ATP is bound by residues 98–106 (IGAGAFGVV) and Lys-121. The active-site Proton acceptor is Asp-219.

Belongs to the protein kinase superfamily. CAMK Ser/Thr protein kinase family. As to quaternary structure, interacts with BZP1.

It catalyses the reaction L-seryl-[protein] + ATP = O-phospho-L-seryl-[protein] + ADP + H(+). It carries out the reaction L-threonyl-[protein] + ATP = O-phospho-L-threonyl-[protein] + ADP + H(+). In terms of biological role, may regulate an early stage of the zoospore pathway. The protein is Serine/threonine-protein kinase PKZ1 of Phytophthora infestans (Potato late blight agent).